Here is a 614-residue protein sequence, read N- to C-terminus: Aspartate--tRNA ligase (614 aa).

Glu174 serves as a coordination point for L-aspartate. Positions 198–201 (QLFK) are aspartate. Residue Arg220 coordinates L-aspartate. ATP-binding positions include 220 to 222 (RDE) and Gln229. Residue His448 participates in L-aspartate binding. Glu482 lines the ATP pocket. L-aspartate is bound at residue Arg489. ATP is bound at residue 534 to 537 (GLDR).

This sequence belongs to the class-II aminoacyl-tRNA synthetase family. Type 1 subfamily. Homodimer.

It localises to the cytoplasm. The catalysed reaction is tRNA(Asp) + L-aspartate + ATP = L-aspartyl-tRNA(Asp) + AMP + diphosphate. Functionally, catalyzes the attachment of L-aspartate to tRNA(Asp) in a two-step reaction: L-aspartate is first activated by ATP to form Asp-AMP and then transferred to the acceptor end of tRNA(Asp). The protein is Aspartate--tRNA ligase of Lactobacillus acidophilus (strain ATCC 700396 / NCK56 / N2 / NCFM).